The sequence spans 570 residues: Conserved oligomeric Golgi complex subunit 8 (570 aa).

This sequence belongs to the COG8 family. As to quaternary structure, component of the conserved oligomeric Golgi complex which is composed of eight different subunits and is required for normal Golgi morphology and localization.

The protein localises to the golgi apparatus membrane. Its function is as follows. Required for normal Golgi function. The chain is Conserved oligomeric Golgi complex subunit 8 from Drosophila melanogaster (Fruit fly).